Here is a 138-residue protein sequence, read N- to C-terminus: Large ribosomal subunit protein uL16 (138 aa).

Residues 1–13 (MLQPARRKFRKEQ) show a composition bias toward basic residues. The segment at 1-22 (MLQPARRKFRKEQKGRNTGVAT) is disordered.

Belongs to the universal ribosomal protein uL16 family. Part of the 50S ribosomal subunit.

In terms of biological role, binds 23S rRNA and is also seen to make contacts with the A and possibly P site tRNAs. The sequence is that of Large ribosomal subunit protein uL16 from Acidovorax ebreus (strain TPSY) (Diaphorobacter sp. (strain TPSY)).